Here is a 239-residue protein sequence, read N- to C-terminus: Dephospho-CoA kinase (239 aa).

The DPCK domain occupies 3–206; that stretch reads IIGLTGSIAS…GGEGGEPAAG (204 aa). 11-16 serves as a coordination point for ATP; the sequence is ASGKST. The interval 197–239 is disordered; sequence GGEGGEPAAGSSAHHGAGSVDPGAGPCDGPGAAPEAERRGGDR. Residues 204–230 are compositionally biased toward low complexity; sequence AAGSSAHHGAGSVDPGAGPCDGPGAAP.

Belongs to the CoaE family.

The protein localises to the cytoplasm. The catalysed reaction is 3'-dephospho-CoA + ATP = ADP + CoA + H(+). The protein operates within cofactor biosynthesis; coenzyme A biosynthesis; CoA from (R)-pantothenate: step 5/5. Catalyzes the phosphorylation of the 3'-hydroxyl group of dephosphocoenzyme A to form coenzyme A. The protein is Dephospho-CoA kinase of Symbiobacterium thermophilum (strain DSM 24528 / JCM 14929 / IAM 14863 / T).